We begin with the raw amino-acid sequence, 191 residues long: Pyridoxal 5'-phosphate synthase subunit PdxT (191 aa).

48–50 (GES) is an L-glutamine binding site. The active-site Nucleophile is Cys81. Residues Arg109 and 136-137 (IR) contribute to the L-glutamine site. Residues His172 and Glu174 each act as charge relay system in the active site.

This sequence belongs to the glutaminase PdxT/SNO family. In the presence of PdxS, forms a dodecamer of heterodimers. Only shows activity in the heterodimer.

The enzyme catalyses aldehydo-D-ribose 5-phosphate + D-glyceraldehyde 3-phosphate + L-glutamine = pyridoxal 5'-phosphate + L-glutamate + phosphate + 3 H2O + H(+). It catalyses the reaction L-glutamine + H2O = L-glutamate + NH4(+). It functions in the pathway cofactor biosynthesis; pyridoxal 5'-phosphate biosynthesis. Functionally, catalyzes the hydrolysis of glutamine to glutamate and ammonia as part of the biosynthesis of pyridoxal 5'-phosphate. The resulting ammonia molecule is channeled to the active site of PdxS. The chain is Pyridoxal 5'-phosphate synthase subunit PdxT from Thermus thermophilus (strain ATCC BAA-163 / DSM 7039 / HB27).